The chain runs to 3974 residues: Hybrid PKS-NRPS synthetase 1 (3974 aa).

One can recognise a Ketosynthase family 3 (KS3) domain in the interval 5-442 (SQKIAIIGSA…GTNAHCLIES (438 aa)). Catalysis depends on for beta-ketoacyl synthase activity residues C179, H316, and H362. Residues 561–883 (IFTGQGAQWA…TGILERGLDD (323 aa)) are malonyl-CoA:ACP transacylase (MAT) domain. The tract at residues 954-1079 (HPLLGSRLSA…HDSELGIPES (126 aa)) is N-terminal hotdog fold. The tract at residues 954–1251 (HPLLGSRLSA…QVESVKLVPV (298 aa)) is dehydratase (DH) domain. In terms of domain architecture, PKS/mFAS DH spans 954–1257 (HPLLGSRLSA…LVPVITPDAS (304 aa)). The active-site Proton acceptor; for dehydratase activity is H986. Positions 1107–1257 (TTPISSAKIY…LVPVITPDAS (151 aa)) are C-terminal hotdog fold. The Proton donor; for dehydratase activity role is filled by D1165. Residues 1398–1529 (PWNTELRNAI…GYLLLVAKTG (132 aa)) are methyltransferase (MT) domain. A ketoreductase (KR) domain region spans residues 2108–2282 (TYFLAGMTDS…ASIMDTGVVT (175 aa)). Residues 2492 to 2516 (AGRSASPGASCSDRSLSTRSDETRS) are disordered. Over residues 2498–2509 (PGASCSDRSLST) the composition is skewed to polar residues. Positions 2560–2994 (APLSPGQAQL…LERLRTSSDQ (435 aa)) are condensation (C) domain. Positions 3021–3423 (DAMAEKYFDQ…DGSLILLGRM (403 aa)) are adenylation (A) (KR) domain. The Carrier domain occupies 3537–3613 (SADQLVEAEV…EMAEKMASVR (77 aa)). S3573 carries the post-translational modification O-(pantetheine 4'-phosphoryl)serine. A reductase (RED) domain region spans residues 3657-3940 (VVLTGAADLL…KLEMGEWIAL (284 aa)).

It in the C-terminal section; belongs to the NRP synthetase family.

The protein operates within secondary metabolite biosynthesis. Functionally, hybrid PKS-NRPS synthetase; part of the hps1-dma1 gene cluster that probably mediates the biosynthesis a derivative of cyclopiazonic acid (CPA). The hybrid polyketide synthase-nonribosomal peptide synthetase (PKS-NRPS) nps1 might incorporates acetyl-CoA, malonyl-CoA, and tryptophan (Trp) and utilizes a C-terminal redox-incompetent reductase domain to make and release the tryptophan tetramic acid, cyclo-acetoacetyl-L-tryptophan (c-AATrp), as the first intermediate in the pathway. In addition, the cluster also includes the tryptophan dimethylallyltransferase dma1, the FAD-dependent oxidoreductase toxD, the cytochrome P450 monooxygenase cyp3.1 and the methyltransferase DOTSEDRAFT_139328; the latter 2 being not present in all CPA-producing fungi but involved in additional modifications that occur in biosynthesis the of a range of CPA and CPA-like products. Further studies are required to clarify whether the CPA-like hps1-dma1 cluster is functional or a non-functional relic reflecting evolution of D.septosporum. The polypeptide is Hybrid PKS-NRPS synthetase 1 (Dothistroma septosporum (strain NZE10 / CBS 128990) (Red band needle blight fungus)).